A 61-amino-acid polypeptide reads, in one-letter code: Probable tautomerase lmo2564 (61 aa).

P2 acts as the Proton acceptor; via imino nitrogen in catalysis.

It belongs to the 4-oxalocrotonate tautomerase family.

This Listeria monocytogenes serovar 1/2a (strain ATCC BAA-679 / EGD-e) protein is Probable tautomerase lmo2564.